The following is a 780-amino-acid chain: Striatin (780 aa).

Residues 53–120 (LHFLQHEWAR…QERAKYHKLK (68 aa)) are a coiled coil. The segment at 55-63 (FLQHEWARF) is caveolin-binding. The tract at residues 123–150 (TELNQGDMKPPSYDSDEGNETEVQPQQN) is disordered. S137 is modified (phosphoserine). Positions 149–166 (QNSQLMWKQGRQLLRQYL) are calmodulin-binding. T225 is modified (phosphothreonine). A phosphoserine mark is found at S227, S229, S245, and S259. 3 disordered regions span residues 289–312 (DFLV…DWEK), 334–353 (EQYK…NRSK), and 364–392 (VDEL…ELSR). Residues 299 to 312 (NESRSAGDGTDWEK) are compositionally biased toward basic and acidic residues. Residues 338–351 (KERKGKKGVKRPNR) are compositionally biased toward basic residues. WD repeat units follow at residues 461–500 (SHFD…PAKK), 514–553 (AHKG…VDPY), 567–606 (GHTD…PALS), 662–701 (SSSC…LIHS), 704–743 (AHLE…CIQE), and 750–780 (KFEE…KVFV).

This sequence belongs to the WD repeat striatin family. Part of the core of STRIPAK complexes composed of PP2A catalytic and scaffolding subunits, the striatins (PP2A regulatory subunits), the striatin-associated proteins MOB4, STRIP1 and STRIP2, PDCD10 and members of the STE20 kinases, such as STK24 and STK26. Interacts with CTTNBP2; this interaction may regulate dendritic spine distribution of STRN. Activation of glutamate receptors weakens the interaction with CTTNBP2. Mainly expressed in brain but is also expressed at low levels in various tissues such as kidney, spleen, skeletal muscle and lung.

Its subcellular location is the cytoplasm. The protein resides in the membrane. The protein localises to the cell projection. It is found in the dendritic spine. In terms of biological role, calmodulin-binding scaffolding protein which is the center of the striatin-interacting phosphatase and kinase (STRIPAK) complexes. STRIPAK complexes have critical roles in protein (de)phosphorylation and are regulators of multiple signaling pathways including Hippo, MAPK, nuclear receptor and cytoskeleton remodeling. Different types of STRIPAK complexes are involved in a variety of biological processes such as cell growth, differentiation, apoptosis, metabolism and immune regulation. In Mus musculus (Mouse), this protein is Striatin (Strn).